The primary structure comprises 120 residues: Small ribosomal subunit protein bS6 (120 aa).

This sequence belongs to the bacterial ribosomal protein bS6 family.

In terms of biological role, binds together with bS18 to 16S ribosomal RNA. The chain is Small ribosomal subunit protein bS6 from Blochmanniella floridana.